The following is a 142-amino-acid chain: Small ribosomal subunit protein uS12 (142 aa).

It belongs to the universal ribosomal protein uS12 family. As to quaternary structure, part of the 30S ribosomal subunit.

Functionally, with S4 and S5 plays an important role in translational accuracy. Located at the interface of the 30S and 50S subunits. The protein is Small ribosomal subunit protein uS12 of Methanoculleus marisnigri (strain ATCC 35101 / DSM 1498 / JR1).